Here is a 123-residue protein sequence, read N- to C-terminus: Large ribosomal subunit protein bL12 (123 aa).

This sequence belongs to the bacterial ribosomal protein bL12 family. As to quaternary structure, homodimer. Part of the ribosomal stalk of the 50S ribosomal subunit. Forms a multimeric L10(L12)X complex, where L10 forms an elongated spine to which 2 to 4 L12 dimers bind in a sequential fashion. Binds GTP-bound translation factors.

Its function is as follows. Forms part of the ribosomal stalk which helps the ribosome interact with GTP-bound translation factors. Is thus essential for accurate translation. This is Large ribosomal subunit protein bL12 from Maricaulis maris (strain MCS10) (Caulobacter maris).